The sequence spans 334 residues: MTSLTQYFEQHPKLPQTQAVIDVITTITNVGKQITDLLRQGALADIHGEAGAENVQGEQQKKLDVIANDLLLEALTANKHCAGVASEELDDATPANESGELLVLFDPLDGSSNIDINMPTGTIFSILPHNNKGQAAQNADFLQKGTEQLAAGYLLYGSSAMLAFTLSESLDANNEGVVMFSLNPSTGEFELVKNNITIDADTKEYAINASNARHWLPPMQQYINELLAGSSGPRGKNFNTRWVAAMVGDVHRILCRGGIFIYPKDTKDPNKAGKLRLMYEANPMSLLIERAGGASTDALNRIMDCEPTDIHQRVAVVLGAKNEVEYVQKLHQQA.

Positions 87, 106, 108, and 109 each coordinate Mg(2+). Residues 109–112 (DGSS), N208, and K274 each bind substrate. Residue E280 participates in Mg(2+) binding.

Belongs to the FBPase class 1 family. In terms of assembly, homotetramer. It depends on Mg(2+) as a cofactor.

Its subcellular location is the cytoplasm. The catalysed reaction is beta-D-fructose 1,6-bisphosphate + H2O = beta-D-fructose 6-phosphate + phosphate. It participates in carbohydrate biosynthesis; gluconeogenesis. The chain is Fructose-1,6-bisphosphatase class 1 from Psychrobacter sp. (strain PRwf-1).